Consider the following 166-residue polypeptide: Large ribosomal subunit protein uL11z (166 aa).

It belongs to the universal ribosomal protein uL11 family.

Binds directly to 26S ribosomal RNA. This is Large ribosomal subunit protein uL11z (RPL12A) from Arabidopsis thaliana (Mouse-ear cress).